Consider the following 32-residue polypeptide: VRDAYIAKPENCVYHCAGNEGCNNLCTCNGAT.

The region spanning 2-32 (RDAYIAKPENCVYHCAGNEGCNNLCTCNGAT) is the LCN-type CS-alpha/beta domain.

As to expression, expressed by the venom gland.

It is found in the secreted. In terms of biological role, alpha toxins bind voltage-independently at site-3 of sodium channels (Nav) and inhibit the inactivation of the activated channels, thereby blocking neuronal transmission. This toxin dose-dependently delays inactivation of voltage-gated sodium channels (Nav) (EC(50)=0.91 uM), and shifts the steady-state activation and inactivation to hyperpolarized direction. In addition, it dose-dependently alters calcium dynamics and increases phosphorylation of MAP kinases 1/3 (MAPK1/MAPK3) and cAMP-response element binding (CREB) proteins in neocortical neurons. This effect is eliminated by tetrodotoxin, a Nav blocker. The chain is Sodium channel neurotoxin BmK NT2 from Olivierus martensii (Manchurian scorpion).